The sequence spans 559 residues: Polypeptide N-acetylgalactosaminyltransferase 1 (559 aa).

Topologically, residues 1–8 are cytoplasmic; it reads MRKFAYCK. Residues 9-28 traverse the membrane as a helical; Signal-anchor for type II membrane protein segment; that stretch reads VVLATSLIWVLLDMFLLLYF. At 29 to 559 the chain is on the lumenal side; that stretch reads SECNKCDEKK…LRNVTLPEIF (531 aa). Positions 45–66 are disordered; the sequence is GDVLEPVQKPHEGPGEMGKPVV. N-linked (GlcNAc...) asparagine glycosylation is present at asparagine 95. 5 cysteine pairs are disulfide-bonded: cysteine 106-cysteine 339, cysteine 330-cysteine 408, cysteine 442-cysteine 459, cysteine 482-cysteine 497, and cysteine 523-cysteine 540. A catalytic subdomain A region spans residues 115 to 225; that stretch reads LPTTSVVIVF…VGWLEPLLAR (111 aa). Positions 156 and 186 each coordinate substrate. 2 residues coordinate Mn(2+): aspartate 209 and histidine 211. Residues 285–347 are catalytic subdomain B; that stretch reads PVRTPTMAGG…TCSHVGHVFR (63 aa). Tryptophan 316 serves as a coordination point for substrate. Residue histidine 344 coordinates Mn(2+). The substrate site is built by arginine 347 and tyrosine 352. The 123-residue stretch at 429–551 folds into the Ricin B-type lectin domain; the sequence is SSLGEIRNVE…GSRSQQWLLR (123 aa). N-linked (GlcNAc...) asparagine glycosylation is present at asparagine 552.

The protein belongs to the glycosyltransferase 2 family. GalNAc-T subfamily. The cofactor is Mn(2+).

It localises to the golgi apparatus. Its subcellular location is the golgi stack membrane. The protein resides in the secreted. It carries out the reaction L-seryl-[protein] + UDP-N-acetyl-alpha-D-galactosamine = a 3-O-[N-acetyl-alpha-D-galactosaminyl]-L-seryl-[protein] + UDP + H(+). The enzyme catalyses L-threonyl-[protein] + UDP-N-acetyl-alpha-D-galactosamine = a 3-O-[N-acetyl-alpha-D-galactosaminyl]-L-threonyl-[protein] + UDP + H(+). Its pathway is protein modification; protein glycosylation. In terms of biological role, catalyzes the initial reaction in O-linked oligosaccharide biosynthesis, the transfer of an N-acetyl-D-galactosamine residue to a serine or threonine residue on the protein receptor. Has a broad spectrum of substrates such as apomucin-, MUC5AC-, MUC1- and MUC2-derived peptides. The polypeptide is Polypeptide N-acetylgalactosaminyltransferase 1 (Sus scrofa (Pig)).